A 426-amino-acid polypeptide reads, in one-letter code: Endoglucanase (426 aa).

Positions M1–G19 are cleaved as a signal peptide. A lipid anchor (N-palmitoyl cysteine) is attached at C20. C20 carries S-diacylglycerol cysteine lipidation. The propeptide occupies C20–A45. E249 serves as the catalytic Proton donor. E361 acts as the Nucleophile in catalysis.

The protein belongs to the glycosyl hydrolase 5 (cellulase A) family.

The protein resides in the cell membrane. The catalysed reaction is Endohydrolysis of (1-&gt;4)-beta-D-glucosidic linkages in cellulose, lichenin and cereal beta-D-glucans.. This chain is Endoglucanase (egl), found in Ralstonia solanacearum (Pseudomonas solanacearum).